The primary structure comprises 328 residues: 3-ketodihydrosphingosine reductase TSC10 (328 aa).

Leu16 provides a ligand contact to NADP(+). Gly19, Ser21, and Gly23 together coordinate NADPH. Positions 19–23 (GASQG) match the GXSXG motif. Leu24 contacts NADP(+). Residues Arg44, Lys48, and Asp73 each contribute to the NADPH site. Residue Asp73 coordinates NADP(+). The active-site Proton donor is Ser161. Residues Tyr175, Lys179, and Ser210 each contribute to the NADP(+) site. Residue Tyr175 is the Proton acceptor of the active site. Lys179 (lowers pKa of active site Tyr) is an active-site residue. A helical membrane pass occupies residues 277–297 (FFQVIVSFIFSIIAPIANYVV).

The protein belongs to the short-chain dehydrogenases/reductases (SDR) family.

It localises to the endoplasmic reticulum membrane. It carries out the reaction sphinganine + NADP(+) = 3-oxosphinganine + NADPH + H(+). It functions in the pathway lipid metabolism; sphingolipid metabolism. Catalyzes the reduction of 3'-oxosphinganine (3-ketodihydrosphingosine/KDS) to sphinganine (dihydrosphingosine/DHS), the second step of de novo sphingolipid biosynthesis. This is 3-ketodihydrosphingosine reductase TSC10 (TSC10) from Debaryomyces hansenii (strain ATCC 36239 / CBS 767 / BCRC 21394 / JCM 1990 / NBRC 0083 / IGC 2968) (Yeast).